A 648-amino-acid chain; its full sequence is Mitochondrial Rho GTPase 1 (648 aa).

The Cytoplasmic portion of the chain corresponds to 1–619; sequence MARYAAGAVD…KHYNRLINRS (619 aa). Ser-14 carries the post-translational modification Phosphoserine. Residues 15–182 form the Miro 1 domain; that stretch reads PKSVRIVVVG…FYYAQKTVLH (168 aa). EF-hand domains lie at 198–233 and 319–354; these read RCVR…CFHA and AAID…APES. Ca(2+) is bound by residues Asp-211, Asp-213, Asp-215, Glu-222, Asp-332, Asp-334, Asp-336, Asn-338, and Glu-343. Positions 427 to 595 constitute a Miro 2 domain; the sequence is RKVFQCFVFG…FRKILTAAQH (169 aa). The chain crosses the membrane as a helical span at residues 620 to 640; it reads LMAVSIGAAAVVVGLAAYRVY. Residues 641-648 are Mitochondrial intermembrane-facing; the sequence is ATRKSSSA.

The protein belongs to the mitochondrial Rho GTPase family. As to expression, expressed in roots, leaves, stems, flowers and siliques.

The protein resides in the mitochondrion outer membrane. Mitochondrial GTPase required to maintain proper development, morphology and intracellular distribution of mitochondria, which in turn are essential for the progress of embryonic cell division, development of haploid male and female gametes, and pollen tube growth. The chain is Mitochondrial Rho GTPase 1 from Arabidopsis thaliana (Mouse-ear cress).